Here is a 181-residue protein sequence, read N- to C-terminus: Isopentenyl-diphosphate Delta-isomerase (181 aa).

Residues H25 and H32 each coordinate Mn(2+). The Nudix hydrolase domain occupies P30 to M164. The active site involves C67. C67 is a Mg(2+) binding site. Position 69 (H69) interacts with Mn(2+). Residue E87 participates in Mg(2+) binding. Mn(2+) is bound by residues E114 and E116. E116 is a catalytic residue.

The protein belongs to the IPP isomerase type 1 family. As to quaternary structure, homodimer. Mg(2+) serves as cofactor. Requires Mn(2+) as cofactor.

The protein localises to the cytoplasm. It catalyses the reaction isopentenyl diphosphate = dimethylallyl diphosphate. It participates in isoprenoid biosynthesis; dimethylallyl diphosphate biosynthesis; dimethylallyl diphosphate from isopentenyl diphosphate: step 1/1. In terms of biological role, catalyzes the 1,3-allylic rearrangement of the homoallylic substrate isopentenyl (IPP) to its highly electrophilic allylic isomer, dimethylallyl diphosphate (DMAPP). The protein is Isopentenyl-diphosphate Delta-isomerase of Salmonella typhi.